The primary structure comprises 191 residues: Large ribosomal subunit protein bL9c (191 aa).

Residues 1 to 35 (MASPSCASTLPWTAAAFSYPRRLQTRRAPSLVIVA) constitute a chloroplast transit peptide.

It belongs to the bacterial ribosomal protein bL9 family. As to quaternary structure, part of the 50S ribosomal subunit.

It is found in the plastid. Its subcellular location is the chloroplast. Binds to the 23S rRNA. This Triticum aestivum (Wheat) protein is Large ribosomal subunit protein bL9c (RPL9).